We begin with the raw amino-acid sequence, 1012 residues long: Vacuolar membrane protease (1012 aa).

The Cytoplasmic portion of the chain corresponds to 1–60; that stretch reads MRRSTDPRNLLVRRGPLLVDGESAISELDPGFFPTGDAPKMSSTTRRRFNLIAFTPGPVT. A helical membrane pass occupies residues 61–81; the sequence is VISSLVYLALLIPLLLVHTIV. At 82 to 432 the chain is on the vacuolar side; that stretch reads PSAPKSNPKG…SFAVFRLHTL (351 aa). An N-linked (GlcNAc...) asparagine glycan is attached at asparagine 159. The Zn(2+) site is built by histidine 215 and aspartate 227. The active-site Proton acceptor is the glutamate 261. 3 residues coordinate Zn(2+): glutamate 262, glutamate 287, and histidine 360. A helical membrane pass occupies residues 433–453; the sequence is FAISVTLLVVCPIVLFVIGII. Residues 454–487 are Cytoplasmic-facing; sequence LSKMDKMYLFSIHETIPETKEKVSVRGLRGLFRY. A helical transmembrane segment spans residues 488–508; sequence PIILVVSSGILIGLSYLLAKV. Over 509–518 the chain is Vacuolar; the sequence is NPFIVHSSSY. A helical transmembrane segment spans residues 519-539; sequence AVWSMMLSSWIFMTWFLSCIA. Residues 540–550 lie on the Cytoplasmic side of the membrane; it reads DFFRPSALHRA. A helical transmembrane segment spans residues 551-571; sequence YTFTWQLLVMWVLLVISTVYV. The Vacuolar portion of the chain corresponds to 572-575; the sequence is NQHD. A helical membrane pass occupies residues 576 to 596; the sequence is IAAGYFIVFYFAGTFLATLIS. Residues 597-710 lie on the Cytoplasmic side of the membrane; the sequence is YLELFALPNK…WSASLPTWTW (114 aa). Positions 614-629 are enriched in polar residues; it reads SQYPSRLGSNRSSRIL. Positions 614-660 are disordered; the sequence is SQYPSRLGSNRSSRILSPSADELPTGGDNNGEIYDGEEEPTESSSLL. A helical transmembrane segment spans residues 711-731; sequence VLQFLFVGPVVIMFIGQLGLF. The Vacuolar portion of the chain corresponds to 732–743; sequence LTSAMNQVGADG. A helical transmembrane segment spans residues 744–764; it reads VGLLVVYIAIAVFSVLLLIPL. Over 765-777 the chain is Cytoplasmic; it reads SPFIHRFTYHVPT. A helical transmembrane segment spans residues 778–798; sequence FLLLVFIATLIYNLAAFPFSA. The Vacuolar segment spans residues 799–1012; the sequence is ENRLKIFFVQ…DGLVEVSRGF (214 aa). N-linked (GlcNAc...) asparagine glycans are attached at residues asparagine 842 and asparagine 878.

Belongs to the peptidase M28 family. Zn(2+) serves as cofactor.

It localises to the vacuole membrane. Functionally, may be involved in vacuolar sorting and osmoregulation. This Coccidioides posadasii (strain C735) (Valley fever fungus) protein is Vacuolar membrane protease.